An 837-amino-acid chain; its full sequence is Protein translocase subunit SecA (837 aa).

ATP-binding positions include Gln85, 103-107 (GEGKT), and Asp493. Zn(2+) contacts are provided by Cys821, Cys823, Cys832, and His833.

This sequence belongs to the SecA family. As to quaternary structure, monomer and homodimer. Part of the essential Sec protein translocation apparatus which comprises SecA, SecYEG and auxiliary proteins SecDF. Other proteins may also be involved. The cofactor is Zn(2+).

It is found in the cell membrane. It localises to the cytoplasm. It carries out the reaction ATP + H2O + cellular proteinSide 1 = ADP + phosphate + cellular proteinSide 2.. In terms of biological role, part of the Sec protein translocase complex. Interacts with the SecYEG preprotein conducting channel. Has a central role in coupling the hydrolysis of ATP to the transfer of proteins into and across the cell membrane, serving as an ATP-driven molecular motor driving the stepwise translocation of polypeptide chains across the membrane. This Streptococcus pneumoniae serotype 2 (strain D39 / NCTC 7466) protein is Protein translocase subunit SecA.